The following is an 801-amino-acid chain: Leucine--tRNA ligase (801 aa).

Residues 39 to 50 (PYPSGAGIHVGH) carry the 'HIGH' region motif. Positions 578–582 (KMSKS) match the 'KMSKS' region motif. An ATP-binding site is contributed by Lys581.

The protein belongs to the class-I aminoacyl-tRNA synthetase family.

It is found in the cytoplasm. The enzyme catalyses tRNA(Leu) + L-leucine + ATP = L-leucyl-tRNA(Leu) + AMP + diphosphate. The polypeptide is Leucine--tRNA ligase (Mesoplasma florum (strain ATCC 33453 / NBRC 100688 / NCTC 11704 / L1) (Acholeplasma florum)).